The following is a 366-amino-acid chain: Carboxy-cis,cis-muconate cyclase (366 aa).

Residues histidine 149, arginine 197, glutamate 213, and arginine 275 contribute to the active site.

It belongs to the cycloisomerase 2 family. Homotetramer.

The catalysed reaction is 3-carboxy-2,5-dihydro-5-oxofuran-2-acetate = 3-carboxy-cis,cis-muconate. Its pathway is aromatic compound metabolism; beta-ketoadipate pathway; 3-carboxy-cis,cis-muconate from 3-carboxy-2,5-dihydro-5-oxofuran-2-acetate: step 1/1. Functionally, catalyzes a syn cycloisomerization. Also possesses mle activity. This Neurospora crassa (strain ATCC 24698 / 74-OR23-1A / CBS 708.71 / DSM 1257 / FGSC 987) protein is Carboxy-cis,cis-muconate cyclase.